The sequence spans 423 residues: Gamma-glutamyl phosphate reductase (423 aa).

The protein belongs to the gamma-glutamyl phosphate reductase family.

It is found in the cytoplasm. The catalysed reaction is L-glutamate 5-semialdehyde + phosphate + NADP(+) = L-glutamyl 5-phosphate + NADPH + H(+). Its pathway is amino-acid biosynthesis; L-proline biosynthesis; L-glutamate 5-semialdehyde from L-glutamate: step 2/2. Its function is as follows. Catalyzes the NADPH-dependent reduction of L-glutamate 5-phosphate into L-glutamate 5-semialdehyde and phosphate. The product spontaneously undergoes cyclization to form 1-pyrroline-5-carboxylate. In Desulfovibrio desulfuricans (strain ATCC 27774 / DSM 6949 / MB), this protein is Gamma-glutamyl phosphate reductase.